Consider the following 150-residue polypeptide: 3-dehydroquinate dehydratase (150 aa).

Tyrosine 26 acts as the Proton acceptor in catalysis. Positions 77, 83, and 90 each coordinate substrate. Histidine 103 (proton donor) is an active-site residue. Substrate-binding positions include 104–105 and arginine 114; that span reads LS.

This sequence belongs to the type-II 3-dehydroquinase family. Homododecamer.

The enzyme catalyses 3-dehydroquinate = 3-dehydroshikimate + H2O. It participates in metabolic intermediate biosynthesis; chorismate biosynthesis; chorismate from D-erythrose 4-phosphate and phosphoenolpyruvate: step 3/7. In terms of biological role, catalyzes a trans-dehydration via an enolate intermediate. In Erwinia tasmaniensis (strain DSM 17950 / CFBP 7177 / CIP 109463 / NCPPB 4357 / Et1/99), this protein is 3-dehydroquinate dehydratase.